The primary structure comprises 284 residues: Tropomyosin (284 aa).

A coiled-coil region spans residues 1-284 (MDGIKKKMIA…DQTFAELTGY (284 aa)). Residues 111-131 (TKLEEASKTAEESERGRKDLE) form a disordered region.

The protein belongs to the tropomyosin family. In terms of assembly, homodimer.

Functionally, tropomyosin, in association with the troponin complex, plays a central role in the calcium dependent regulation of muscle contraction. This is Tropomyosin from Schistosoma haematobium (Blood fluke).